A 533-amino-acid polypeptide reads, in one-letter code: Probable protein kinase UbiB (533 aa).

A helical transmembrane segment spans residues 24 to 44 (LILELPMLPWWLRLLGAALPW). A Protein kinase domain is found at 126–494 (RFEREPLASA…WKSSRHDWLG (369 aa)). ATP is bound by residues 132 to 140 (LASASVAQV) and K154. The Proton acceptor role is filled by D289. Residues 510–530 (LGQQLEAWPAWVMLAGGVFLI) form a helical membrane-spanning segment.

This sequence belongs to the ABC1 family. UbiB subfamily.

It is found in the cell inner membrane. It participates in cofactor biosynthesis; ubiquinone biosynthesis [regulation]. In terms of biological role, is probably a protein kinase regulator of UbiI activity which is involved in aerobic coenzyme Q (ubiquinone) biosynthesis. This Pseudomonas paraeruginosa (strain DSM 24068 / PA7) (Pseudomonas aeruginosa (strain PA7)) protein is Probable protein kinase UbiB.